The chain runs to 323 residues: Iron-sulfur cluster transfer protein NUBPL (323 aa).

65–72 (AKGGVGKS) is a binding site for ATP.

Belongs to the Mrp/NBP35 ATP-binding proteins family. [4Fe-4S] cluster serves as cofactor.

The protein resides in the mitochondrion. Iron-sulfur cluster transfer protein involved in the assembly of the mitochondrial membrane respiratory chain NADH dehydrogenase (Complex I). May deliver one or more Fe-S clusters to complex I subunits. This Dictyostelium discoideum (Social amoeba) protein is Iron-sulfur cluster transfer protein NUBPL (nubpl).